A 214-amino-acid chain; its full sequence is Large ribosomal subunit protein uL3 (214 aa).

Position 153 is an N5-methylglutamine (Gln-153).

Belongs to the universal ribosomal protein uL3 family. In terms of assembly, part of the 50S ribosomal subunit. Forms a cluster with proteins L14 and L19. In terms of processing, methylated by PrmB.

In terms of biological role, one of the primary rRNA binding proteins, it binds directly near the 3'-end of the 23S rRNA, where it nucleates assembly of the 50S subunit. In Methylobacillus flagellatus (strain ATCC 51484 / DSM 6875 / VKM B-1610 / KT), this protein is Large ribosomal subunit protein uL3.